Reading from the N-terminus, the 606-residue chain is Atypical protein kinase C (606 aa).

Residues 30 to 113 (SITVKTAYNG…SQLVIHVFPN (84 aa)) form the PB1 domain. The Phorbol-ester/DAG-type zinc finger occupies 145–195 (GHIFQAKRFNRRAFCAYCQDRIWGLGRQGFKCIQCKLLVHKKCHKLVQKHC). The Protein kinase domain occupies 264 to 532 (FELIRVIGRG…FMDIVSHPFF (269 aa)). Residues 270–278 (IGRGSYAKV) and Lys293 each bind ATP. Asp388 acts as the Proton acceptor in catalysis. Positions 533–604 (KNMDWELLER…VNPLLMSLED (72 aa)) constitute an AGC-kinase C-terminal domain.

This sequence belongs to the protein kinase superfamily. AGC Ser/Thr protein kinase family. PKC subfamily. Interacts with baz; the interaction is required for apical localization of aPKC in neuroblasts and epithelial cells. Interacts with Dap160; the interaction promotes aPKC apical localization and kinase activity. Interacts with and phosphorylates l(2)gl and yrt. Interacts with crb and ref(2)P. Forms a complex with baz, fz and Patj. Expressed in the testis. In spermatid cysts, localizes near the tips of spermatid flagellar axonemes (at protein level). Detectable in freshly laid eggs before onset of zygotic transcription so is deposited in the egg during oogenesis. At the cellular blastoderm stage, present in all cells except the pole cells. During gastrulation, strongly expressed in tissues undergoing morphogenetic movements such as invaginating mesoderm, proctodeum and cephalic furrow. Strongly expressed in neuroblasts.

The protein localises to the cytoplasm. It localises to the cell cortex. The protein resides in the apicolateral cell membrane. It carries out the reaction L-seryl-[protein] + ATP = O-phospho-L-seryl-[protein] + ADP + H(+). The enzyme catalyses L-threonyl-[protein] + ATP = O-phospho-L-threonyl-[protein] + ADP + H(+). In terms of biological role, serine/threonine protein kinase which is required for apico-basal cell polarity in the germ line as well as in epithelial and neural precursor cells, for epithelial planar cell polarity and for cell proliferation. During oocyte development, required for the posterior translocation of oocyte specification factors and for the posterior establishment of the microtubule organizing center within the presumptive oocyte. Phosphorylates l(2)gl which restricts l(2)gl activity to the oocyte posterior and regulates posterior enrichment of par-1, leading to establishment of correct oocyte polarity. Essential for apical localization of l(2)gl and par-6 in neuroblasts and for exclusion of mira from the apical cortex. Phosphorylates baz which is required for targeting of baz to the postsynaptic region where it is involved in actin organization, and for apical exclusion of baz which is necessary for establishment of the apical/lateral border in epithelial cells. Phosphorylates yrt which prevents its premature apical localization and is necessary for correct epithelial cell polarization. Required for the establishment of mitotic spindle orientation during symmetric division of epithelial cells and for apical exclusion of raps/Pins. Involved in symmetric adherens junction positioning during embryogenesis. Required for polarization of the spermatid cyst which is necessary for sperm differentiation. Required for stimulation of the Toll signaling pathway which activates Dif and dl and plays a role in innate immunity. Plays a role in memory enhancement. In Drosophila melanogaster (Fruit fly), this protein is Atypical protein kinase C.